The following is a 446-amino-acid chain: Transcription factor Sox-10 (446 aa).

Disordered regions lie at residues 1 to 60 (MSDD…SEDE), 153 to 191 (RLRMQHKKDHPDYKYQPRRRKNGKPSPGEGDGSSEAEGG), and 203 to 264 (HLDH…IDFG). Residues 36–48 (DDDDDDDEEEEEE) are compositionally biased toward acidic residues. Lys52 is covalently cross-linked (Glycyl lysine isopeptide (Lys-Gly) (interchain with G-Cter in SUMO)). The tract at residues 56–96 (DSEDERFPVCIREAVSQVLNGYDWTLVPMPVRVNGGSKSKP) is dimerization (DIM). The HMG box DNA-binding region spans 98–166 (VKRPMNAFMV…QHKKDHPDYK (69 aa)). Basic and acidic residues predominate over residues 153 to 167 (RLRMQHKKDHPDYKY). Positions 213–226 (SDGNSEHSTGQSHG) are enriched in polar residues. The interval 217–303 (SEHSTGQSHG…NGHAGHPSHI (87 aa)) is transactivation domain (TAM). Basic and acidic residues predominate over residues 243–257 (SDGKRDGSHALREGG). The segment at 337–446 (KAQVKTESSS…QPVYTTLSRP (110 aa)) is transactivation domain (TAC). A Glycyl lysine isopeptide (Lys-Gly) (interchain with G-Cter in SUMO) cross-link involves residue Lys341. The segment at 421-446 (SDPPSVAQSHSPTHWEQPVYTTLSRP) is disordered. Residues 426–446 (VAQSHSPTHWEQPVYTTLSRP) show a composition bias toward polar residues.

As to quaternary structure, interacts with the sumoylation factors ube2i/ubc9 and sumo1. In terms of processing, sumoylated. In terms of tissue distribution, first expressed at stages 13/14 at the lateral edges of the neural plate, in the neural crest forming region. By stage 22, neural crest cells migrate in the cranial region and strong expression is seen in the crest cells that populate the branchial arches as well as those migrating in the frontonasal region. Also strongly expressed in the trunk neural crest. Expression in the otic vesicle begins around stage 25 and persists until at least stage 40. At stage 30, expression is down-regulated in the cranial neural crest of the pharyngeal arches but persists in the trunk neural crest, in the otic vesicle and in discrete domains adjacent to the hindbrain. At stage 40, expression is restricted to the otic vesicle, differentiated pigment cells, and in several cranial ganglia.

It localises to the cytoplasm. It is found in the nucleus. Its function is as follows. Acts early in neural crest formation, functioning redundantly with the other group E Sox factors sox8 and sox9 to induce neural crest progenitors. Acts downstream of wnt-signaling at the neural plate border. Involved in the specification of neural crest progenitors fated to form the pigment cell lineage. The chain is Transcription factor Sox-10 (sox10) from Xenopus laevis (African clawed frog).